A 74-amino-acid polypeptide reads, in one-letter code: Protein Vpu (74 aa).

The Extracellular portion of the chain corresponds to Met1–Leu4. A helical membrane pass occupies residues Gly5–Lys25. The Cytoplasmic portion of the chain corresponds to Glu26 to Val74. At Ser54 the chain carries Phosphoserine; by host CK2.

This sequence belongs to the HIV-1 VPU protein family. As to quaternary structure, homopentamer. Interacts with host CD4 and BRTC; these interactions induce proteasomal degradation of CD4. Interacts with host BST2; this interaction leads to the degradation of host BST2. Interacts with host FBXW11. Interacts with host AP1M1; this interaction plays a role in the mistrafficking and subsequent degradation of host BST2. Interacts with host RANBP2; this interaction allows Vpu to down-regulate host BLM sumoylation. In terms of processing, phosphorylated by host CK2. This phosphorylation is necessary for interaction with human BTRC and degradation of CD4.

It is found in the host membrane. Ion channel activity is inhibited by hexamethylene amiloride in vitro. Its function is as follows. Enhances virion budding by targeting host CD4 and Tetherin/BST2 to proteasome degradation. Degradation of CD4 prevents any unwanted premature interactions between viral Env and its host receptor CD4 in the endoplasmic reticulum. Degradation of antiretroviral protein Tetherin/BST2 is important for virion budding, as BST2 tethers new viral particles to the host cell membrane. Mechanistically, Vpu bridges either CD4 or BST2 to BTRC, a substrate recognition subunit of the Skp1/Cullin/F-box protein E3 ubiquitin ligase, induces their ubiquitination and subsequent proteasomal degradation. The alteration of the E3 ligase specificity by Vpu seems to promote the degradation of host IKBKB, leading to NF-kappa-B down-regulation and subsequent apoptosis. Acts as a viroporin that forms an oligomeric ion channel in membranes. Modulates the host DNA repair mechanisms to promote degradation of nuclear viral cDNA in cells that are already productively infected in order to suppress immune sensing and proviral hyper-integration (superinfection). Manipulates PML-NBs and modulates SUMOylation of host BLM protein thereby enhancing its DNA-end processing activity toward viral unintegrated linear DNA. Also inhibits RAD52-mediated homologous repair of viral cDNA, preventing the generation of dead-end circular forms of single copies of the long terminal repeat and permitting sustained nucleolytic attack. The sequence is that of Protein Vpu from Human immunodeficiency virus type 1 group N (isolate YBF106) (HIV-1).